The sequence spans 366 residues: Flagellar P-ring protein (366 aa).

An N-terminal signal peptide occupies residues 1 to 27 (MKSKYSIFCMFLLRGFIFLGTVFSLNS).

This sequence belongs to the FlgI family. The basal body constitutes a major portion of the flagellar organelle and consists of four rings (L,P,S, and M) mounted on a central rod.

It is found in the periplasm. The protein resides in the bacterial flagellum basal body. Assembles around the rod to form the L-ring and probably protects the motor/basal body from shearing forces during rotation. The chain is Flagellar P-ring protein from Leptospira interrogans serogroup Icterohaemorrhagiae serovar copenhageni (strain Fiocruz L1-130).